A 639-amino-acid polypeptide reads, in one-letter code: Chaperone protein DnaK (639 aa).

Threonine 198 is modified (phosphothreonine; by autocatalysis). Positions 601–639 (AQQAPGADSCGGDCGQQQEAGAKPKDEKVVDADFEEVKK) are disordered. Basic and acidic residues predominate over residues 622-639 (AKPKDEKVVDADFEEVKK).

This sequence belongs to the heat shock protein 70 family.

Functionally, acts as a chaperone. The sequence is that of Chaperone protein DnaK from Trichlorobacter lovleyi (strain ATCC BAA-1151 / DSM 17278 / SZ) (Geobacter lovleyi).